Consider the following 650-residue polypeptide: Amyloid beta precursor like protein 1 (650 aa).

The first 38 residues, 1 to 38 (MGPASPAARGLSRRPGQPPLPLLLPLLLLLLRAQPAIG), serve as a signal peptide directing secretion. Over 39 to 580 (SLAGGSPGAA…APAGTGVSRE (542 aa)) the chain is Extracellular. The segment at 50–146 (APGSAQVAGL…PFRCLPGEFV (97 aa)) is GFLD subdomain. The 163-residue stretch at 50–212 (APGSAQVAGL…RGVEYVCCPP (163 aa)) folds into the E1 domain. 6 disulfides stabilise this stretch: cysteine 60/cysteine 84, cysteine 95/cysteine 140, cysteine 120/cysteine 128, cysteine 156/cysteine 210, cysteine 167/cysteine 197, and cysteine 181/cysteine 209. The cuBD subdomain stretch occupies residues 154-212 (EGCRFLHQERMDQCESSTRRHQEAQEACSSQGLILHGSGMLLPCGSDRFRGVEYVCCPP). Histidine 174 serves as a coordination point for Cu(2+). Zn(2+) is bound by residues glutamate 206, cysteine 209, and cysteine 210. Residues 214 to 287 (GTPDPSGTAV…LAVVGKVTPT (74 aa)) are disordered. Threonine 215 carries O-linked (GalNAc...) threonine glycosylation. Serine 227 carries an O-linked (GalNAc...) serine glycan. Threonine 228 carries an O-linked (GalNAc...) threonine glycan. The O-glycosylated at three sites stretch occupies residues 285 to 305 (TPTPRPTDGVDIYFGMPGEIS). The 192-residue stretch at 293-484 (GVDIYFGMPG…QELRPQIQEL (192 aa)) folds into the E2 domain. Heparin-binding stretches follow at residues 310–342 (FLRAKMDLEERRMRQINEVMREWAMADNQSKNL) and 410–441 (LLALRRYLRAEQKEQRHTLRHYQHVAAVDPEK). Residue asparagine 337 is glycosylated (N-linked (GlcNAc...) asparagine). The collagen-binding stretch occupies residues 442 to 459 (AQQMRFQVHTHLQVIEER). N-linked (GlcNAc...) asparagine glycosylation is present at asparagine 461. The disordered stretch occupies residues 492–546 (PSELEAPAPGGSSEDKGGLQPPDSKDDTPMTLPKGSTEQDAASPEKEKMNPLEQY). Composition is skewed to basic and acidic residues over residues 504–519 (SEDKGGLQPPDSKDDT) and 534–546 (SPEKEKMNPLEQY). Residue asparagine 551 is glycosylated (N-linked (GlcNAc...) asparagine). Cu(2+) is bound at residue histidine 561. Histidine 561 provides a ligand contact to Zn(2+). A helical transmembrane segment spans residues 581 to 603 (AVSGLLIMGAGGGSLIVLSMLLL). The short motif at 604–615 (RRKKPYGAISHG) is the Basolateral sorting signal element. The Cytoplasmic segment spans residues 604-650 (RRKKPYGAISHGVVEVDPMLTLEEQQLRELQRHGYENPTYRFLEERP). Residues 632 to 649 (ELQRHGYENPTYRFLEER) are interaction with DAB1. Positions 636–650 (HGYENPTYRFLEERP) are interaction with DAB2. A Clathrin-binding motif is present at residues 640-643 (NPTY). The short motif at 640–643 (NPTY) is the NPXY motif; contains endocytosis signal element.

This sequence belongs to the APP family. In terms of assembly, monomer and homodimer. Heparin binding promotes homodimerization. Binds, via its C-terminus, to the PID domain of several cytoplasmic proteins, including APBB and APBA family members, MAPK8IP1 and DAB1. Binding to Dab1 inhibits its serine phosphorylation. Interacts with CPEB1. Interacts (via NPXY motif) with DAB2 (via PID domain); the interaction is impaired by tyrosine phosphorylation of the NPXY motif. Interacts (via NPXY motif) with DAB1. Proteolytically cleaved by caspases during neuronal apoptosis. Cleaved, in vitro, at Asp-620 by caspase-3. In terms of processing, N- and O-glycosylated. O-glycosylation with core 1 or possibly core 8 glycans. Glycosylation on Ser-227 is the preferred site to Thr-228. Expressed in the cerebral cortex where it is localized to the postsynaptic density (PSD).

It is found in the cell membrane. Its subcellular location is the cytoplasm. In terms of biological role, may play a role in postsynaptic function. The C-terminal gamma-secretase processed fragment, ALID1, activates transcription activation through APBB1 (Fe65) binding. Couples to JIP signal transduction through C-terminal binding. May interact with cellular G-protein signaling pathways. Can regulate neurite outgrowth through binding to components of the extracellular matrix such as heparin and collagen I. The gamma-CTF peptide, C30, is a potent enhancer of neuronal apoptosis. The protein is Amyloid beta precursor like protein 1 (APLP1) of Homo sapiens (Human).